Consider the following 321-residue polypeptide: Mas-related G-protein coupled receptor member D (321 aa).

At 1–8 the chain is on the extracellular side; sequence MNSTLDSS. N-linked (GlcNAc...) asparagine glycosylation occurs at N2. The helical transmembrane segment at 9 to 29 threads the bilayer; the sequence is PAPGLTISPTMDLVTWIYFSV. T30 is a topological domain (cytoplasmic). A helical transmembrane segment spans residues 31–51; it reads FLAMATCVGGMAGNSLVIWLL. The Extracellular portion of the chain corresponds to 52 to 72; the sequence is SCNGMQRSPFCVYVLNLAVAD. Residues 73 to 93 form a helical membrane-spanning segment; the sequence is FLFLFCMASMLSLETGPLLIV. Residues 94–146 are Cytoplasmic-facing; that stretch reads NISAKIYEGMRRIKYFAYTAGLSLLTAISTQRCLSVLFPIWYKCHRPRHLSSV. Residues 147–167 traverse the membrane as a helical segment; sequence VSGALWALAFLMNFLASFFCV. Over 168–181 the chain is Extracellular; the sequence is QFWHPNKHQCFKVD. A helical transmembrane segment spans residues 182–202; that stretch reads IVFNSLILGIFMPVMILTSTI. Topologically, residues 203 to 220 are cytoplasmic; sequence LFIRVRKNSLMQRRRPRR. The helical transmembrane segment at 221 to 241 threads the bilayer; the sequence is LYVVILTSILVFLTCSLPLGI. The Extracellular segment spans residues 242 to 260; the sequence is NWFLLYWVDVKRDVRLLYS. A helical transmembrane segment spans residues 261–281; it reads CVSRFSSSLSSSANPVIYFLV. The Cytoplasmic segment spans residues 282–321; the sequence is GSQKSHRLQESLGAVLGRALRDEPEPEGRETPSTCTNDGV. The span at 302–311 shows a compositional bias: basic and acidic residues; it reads RDEPEPEGRE. The disordered stretch occupies residues 302 to 321; the sequence is RDEPEPEGRETPSTCTNDGV. Residues 312–321 are compositionally biased toward polar residues; that stretch reads TPSTCTNDGV.

Belongs to the G-protein coupled receptor 1 family. Mas subfamily. In terms of tissue distribution, expressed in a subset of sensory neurons that includes nociceptors. Expressed in the subclass of non-peptidergic sensory neurons that are IB4(+) and VR1(-).

Its subcellular location is the cell membrane. In terms of biological role, may regulate nociceptor function and/or development, including the sensation or modulation of pain. Functions as a specific membrane receptor for beta-alanine. The receptor couples with G-protein G(q) and G(i). This is Mas-related G-protein coupled receptor member D (Mrgprd) from Mus musculus (Mouse).